The primary structure comprises 528 residues: Peptide chain release factor 3 (528 aa).

The region spanning 10–278 (DKRRTFGIIS…TFVDLAPAPQ (269 aa)) is the tr-type G domain. Residues 19-26 (SHPDAGKT), 87-91 (DTPGH), and 141-144 (NKLD) contribute to the GTP site.

This sequence belongs to the TRAFAC class translation factor GTPase superfamily. Classic translation factor GTPase family. PrfC subfamily.

Its subcellular location is the cytoplasm. Functionally, increases the formation of ribosomal termination complexes and stimulates activities of RF-1 and RF-2. It binds guanine nucleotides and has strong preference for UGA stop codons. It may interact directly with the ribosome. The stimulation of RF-1 and RF-2 is significantly reduced by GTP and GDP, but not by GMP. The polypeptide is Peptide chain release factor 3 (Oleidesulfovibrio alaskensis (strain ATCC BAA-1058 / DSM 17464 / G20) (Desulfovibrio alaskensis)).